Reading from the N-terminus, the 382-residue chain is Na(+)/H(+) antiporter NhaA 2 (382 aa).

Helical transmembrane passes span F11 to A31, L45 to V65, L91 to P111, G116 to F136, Y145 to Y165, P171 to G191, S197 to H214, W287 to L307, L324 to S344, and A353 to G373.

This sequence belongs to the NhaA Na(+)/H(+) (TC 2.A.33) antiporter family.

Its subcellular location is the cell inner membrane. The enzyme catalyses Na(+)(in) + 2 H(+)(out) = Na(+)(out) + 2 H(+)(in). Its function is as follows. Na(+)/H(+) antiporter that extrudes sodium in exchange for external protons. The sequence is that of Na(+)/H(+) antiporter NhaA 2 from Pelobacter propionicus (strain DSM 2379 / NBRC 103807 / OttBd1).